Reading from the N-terminus, the 362-residue chain is Protein-glutamate methylesterase/protein-glutamine glutaminase (362 aa).

A Response regulatory domain is found at 5–122 (KVLCVDDSAL…RDGMLDYSEK (118 aa)). 4-aspartylphosphate is present on Asp-56. The CheB-type methylesterase domain occupies 163-355 (LLSTEKLIIV…RRVMARLSSM (193 aa)). Catalysis depends on residues Ser-175, His-201, and Asp-297.

This sequence belongs to the CheB family. Phosphorylated by CheA. Phosphorylation of the N-terminal regulatory domain activates the methylesterase activity.

It localises to the cytoplasm. The catalysed reaction is [protein]-L-glutamate 5-O-methyl ester + H2O = L-glutamyl-[protein] + methanol + H(+). It carries out the reaction L-glutaminyl-[protein] + H2O = L-glutamyl-[protein] + NH4(+). In terms of biological role, involved in chemotaxis. Part of a chemotaxis signal transduction system that modulates chemotaxis in response to various stimuli. Catalyzes the demethylation of specific methylglutamate residues introduced into the chemoreceptors (methyl-accepting chemotaxis proteins or MCP) by CheR. Also mediates the irreversible deamidation of specific glutamine residues to glutamic acid. The protein is Protein-glutamate methylesterase/protein-glutamine glutaminase of Paraburkholderia xenovorans (strain LB400).